Reading from the N-terminus, the 967-residue chain is Aminopeptidase N (967 aa).

At 1 to 8 (MAKGFYIS) the chain is on the cytoplasmic side. Residues 9–32 (KPVGILAILLGVAAVCTIIALSVV) form a helical; Signal-anchor for type II membrane protein membrane-spanning segment. The cytosolic Ser/Thr-rich junction stretch occupies residues 33 to 66 (YSQEKNRSTESSTAASTAAPTGPTTTVATTLDQS). At 33–967 (YSQEKNRSTE…VVLRWFTENS (935 aa)) the chain is on the extracellular side. The N-linked (GlcNAc...) asparagine glycan is linked to Asn38. The disordered stretch occupies residues 41 to 61 (TESSTAASTAAPTGPTTTVAT). The interval 67-967 (KPWNVYRLPK…VVLRWFTENS (901 aa)) is metalloprotease. Asn84 and Asn126 each carry an N-linked (GlcNAc...) asparagine glycan. Tyr175 is subject to Sulfotyrosine. Asn233 and Asn338 each carry an N-linked (GlcNAc...) asparagine glycan. 351–355 (GAMEN) provides a ligand contact to substrate. His387 contacts Zn(2+). The Proton acceptor role is filled by Glu388. 2 residues coordinate Zn(2+): His391 and Glu410. Tyr418 carries the post-translational modification Sulfotyrosine. N-linked (GlcNAc...) asparagine glycans are attached at residues Asn626, Asn682, and Asn740. The interval 670–840 (ASAQKVPVTL…GALACSNQVW (171 aa)) is interaction with FCoV and TGEV spike glycoprotein. Intrachain disulfides connect Cys762–Cys769 and Cys799–Cys835.

It belongs to the peptidase M1 family. As to quaternary structure, homodimer. Interacts with SLC6A19. (Microbial infection) Interacts with FCoV, CCoV, TGEV and HCoV-229E spike glycoprotein. The cofactor is Zn(2+). Sulfated. Post-translationally, N- and O-glycosylated. In terms of processing, may undergo proteolysis and give rise to a soluble form.

The protein resides in the cell membrane. It catalyses the reaction Release of an N-terminal amino acid, Xaa-|-Yaa- from a peptide, amide or arylamide. Xaa is preferably Ala, but may be most amino acids including Pro (slow action). When a terminal hydrophobic residue is followed by a prolyl residue, the two may be released as an intact Xaa-Pro dipeptide.. In terms of biological role, broad specificity aminopeptidase which plays a role in the final digestion of peptides generated from hydrolysis of proteins by gastric and pancreatic proteases. Also involved in the processing of various peptides including peptide hormones, such as angiotensin III and IV, neuropeptides, and chemokines. May also be involved the cleavage of peptides bound to major histocompatibility complex class II molecules of antigen presenting cells. May have a role in angiogenesis and promote cholesterol crystallization. May have a role in amino acid transport by acting as binding partner of amino acid transporter SLC6A19 and regulating its activity. Its function is as follows. (Microbial infection) In case of feline coronavirus (FCoV) infection, serves as a receptor for FCoV spike glycoprotein. It is as well a receptor for other serogroup I coronaviruses, like canine coronavirus (CCoV), porcine transmissible gastroenteritis virus (TGEV), and human coronavirus 229E (HCoV-229E). Also serves as a receptor for infectious bronchitis virus (IBV, Arkansas 99 serotype) in serogroup III. The sequence is that of Aminopeptidase N (ANPEP) from Felis catus (Cat).